The following is a 488-amino-acid chain: UDP-GalNAc:beta-1,3-N-acetylgalactosaminyltransferase 2 (488 aa).

Topologically, residues 1–2 (MR) are cytoplasmic. Residues 3–23 (HLLLLFLCPCAIGVAFHLWLF) traverse the membrane as a helical; Signal-anchor for type II membrane protein segment. N-linked (GlcNAc...) asparagine glycosylation is found at N24, N105, and N162. Over 24 to 488 (NFSGLFTWFP…CGNPCACEDR (465 aa)) the chain is Lumenal.

It belongs to the glycosyltransferase 31 family.

It is found in the golgi apparatus membrane. Its subcellular location is the endoplasmic reticulum. It catalyses the reaction 3-O-(N-acetyl-beta-D-glucosaminyl-(1-&gt;4)-alpha-D-mannosyl)-L-threonyl-[protein] + UDP-N-acetyl-alpha-D-galactosamine = 3-O-[beta-D-GalNAc-(1-&gt;3)-beta-D-GlcNAc-(1-&gt;4)-alpha-D-Man]-L-Thr-[protein] + UDP + H(+). It participates in protein modification; protein glycosylation. Its function is as follows. Beta-1,3-N-acetylgalactosaminyltransferase that synthesizes a unique carbohydrate structure, GalNAc-beta-1-3GlcNAc, on N- and O-glycans. Has no galactose nor galactosaminyl transferase activity toward any acceptor substrate. Involved in alpha-dystroglycan (dag1) glycosylation. This chain is UDP-GalNAc:beta-1,3-N-acetylgalactosaminyltransferase 2 (b3galnt2), found in Xenopus tropicalis (Western clawed frog).